The following is a 589-amino-acid chain: Isocitrate dehydrogenase kinase/phosphatase (589 aa).

Residues 322–328 (APGIRGL) and K343 each bind ATP. The active site involves D378.

Belongs to the AceK family.

It is found in the cytoplasm. It carries out the reaction L-seryl-[isocitrate dehydrogenase] + ATP = O-phospho-L-seryl-[isocitrate dehydrogenase] + ADP + H(+). Its function is as follows. Bifunctional enzyme which can phosphorylate or dephosphorylate isocitrate dehydrogenase (IDH) on a specific serine residue. This is a regulatory mechanism which enables bacteria to bypass the Krebs cycle via the glyoxylate shunt in response to the source of carbon. When bacteria are grown on glucose, IDH is fully active and unphosphorylated, but when grown on acetate or ethanol, the activity of IDH declines drastically concomitant with its phosphorylation. This chain is Isocitrate dehydrogenase kinase/phosphatase, found in Azoarcus sp. (strain BH72).